The sequence spans 782 residues: cGMP-specific 3',5'-cyclic phosphodiesterase gamma (782 aa).

Over 1 to 69 (MKHMFKNILF…LCDNMYSKKY (69 aa)) the chain is Cytoplasmic. The helical transmembrane segment at 70–90 (VILVSHLISLLLMYSVCLIVG) threads the bilayer. Residues 91–97 (NINDLFS) lie on the Extracellular side of the membrane. Residues 98 to 118 (VLKLTYILLHTFTAINIILIL) traverse the membrane as a helical segment. The Cytoplasmic segment spans residues 119–135 (TLHATHYVEMFKSIKGE). The helical transmembrane segment at 136–156 (IFIFYIMMIFVIWCSWLFILF) threads the bilayer. The Extracellular portion of the chain corresponds to 157–181 (NNIKDLLPIVVNVNNFLYATYANNK). A helical transmembrane segment spans residues 182–202 (INIVLGFFAYLPIFYLITIIP). The Cytoplasmic segment spans residues 203 to 208 (CRICYS). A helical transmembrane segment spans residues 209–229 (CAFDILFFIMKVAIFSVYYLI). Residues 230–239 (TMKSYILTDN) are Extracellular-facing. A helical membrane pass occupies residues 240–260 (IFMIISALVGSLFIFVIRYII). The Cytoplasmic segment spans residues 261–782 (EIQRRLSFHN…YAPNLNIYKL (522 aa)). The tract at residues 376–396 (GSKEEPEAESESECVDESKEG) is disordered. The segment covering 381–390 (PEAESESECV) has biased composition (acidic residues). The PDEase domain occupies 423–751 (YEEKENEILK…SKWTKIEKDE (329 aa)). His-504 (proton donor) is an active-site residue. 504–508 (HNSIH) provides a ligand contact to a nucleoside 3',5'-cyclic phosphate. The a divalent metal cation site is built by His-508, His-544, Asp-545, and Asp-654. A nucleoside 3',5'-cyclic phosphate-binding residues include Asp-545, Asp-654, and Gln-706.

It belongs to the cyclic nucleotide phosphodiesterase family. The cofactor is a divalent metal cation.

Its subcellular location is the membrane. The protein resides in the endoplasmic reticulum membrane. The catalysed reaction is 3',5'-cyclic GMP + H2O = GMP + H(+). Its pathway is purine metabolism; 3',5'-cyclic GMP degradation; GMP from 3',5'-cyclic GMP: step 1/1. Specifically hydrolyzes the second messenger cGMP, which is a key regulator of many important physiological processes. Probably by regulating cGMP levels, required for sporozoite motility and invasion of the mosquito salivary glands. This chain is cGMP-specific 3',5'-cyclic phosphodiesterase gamma, found in Plasmodium yoelii.